The chain runs to 751 residues: WD repeat-containing protein 91 (751 aa).

Residues glutamine 183–glutamate 205 adopt a coiled-coil conformation. Residues glutamate 237–glutamine 398 form a disordered region. Residues leucine 238 to alanine 267 are compositionally biased toward polar residues. The span at threonine 356 to threonine 373 shows a compositional bias: basic and acidic residues. 7 WD repeats span residues glutamate 410–alanine 449, isoleucine 452–glutamate 492, serine 517–glutamine 559, proline 564–serine 603, alanine 606–serine 645, valine 668–glutamate 706, and glycine 713–serine 751.

The protein belongs to the WD repeat WDR91 family.

The protein resides in the early endosome membrane. Its subcellular location is the late endosome membrane. In terms of biological role, functions as a negative regulator of the PI3 kinase/PI3K activity associated with endosomal membranes. By modifying the phosphatidylinositol 3-phosphate/PtdInsP3 content of endosomal membranes may regulate endosome fusion, recycling, sorting and early to late endosome transport. This is WD repeat-containing protein 91 from Xenopus tropicalis (Western clawed frog).